We begin with the raw amino-acid sequence, 201 residues long: Putative amino-acid transporter Mb0498 (201 aa).

5 helical membrane-spanning segments follow: residues 25–45, 57–77, 104–124, 133–153, and 169–189; these read VLVI…AGVG, MTLV…LLAA, LVVT…IGAL, WFFG…LGFS, and ILDA…LVTS.

Belongs to the LysE/ArgO transporter (TC 2.A.75) family.

Its subcellular location is the cell membrane. The sequence is that of Putative amino-acid transporter Mb0498 from Mycobacterium bovis (strain ATCC BAA-935 / AF2122/97).